The following is a 214-amino-acid chain: Large ribosomal subunit protein bL25 (214 aa).

2 disordered regions span residues 1-23 (MSNE…SRRL) and 182-214 (DHDQ…ASEE). The span at 200–214 (DDDDAAEGEEAASEE) shows a compositional bias: acidic residues.

Belongs to the bacterial ribosomal protein bL25 family. CTC subfamily. In terms of assembly, part of the 50S ribosomal subunit; part of the 5S rRNA/L5/L18/L25 subcomplex. Contacts the 5S rRNA. Binds to the 5S rRNA independently of L5 and L18.

This is one of the proteins that binds to the 5S RNA in the ribosome where it forms part of the central protuberance. The chain is Large ribosomal subunit protein bL25 from Alcanivorax borkumensis (strain ATCC 700651 / DSM 11573 / NCIMB 13689 / SK2).